Reading from the N-terminus, the 427-residue chain is Homeobox protein knotted-1-like 3 (427 aa).

2 disordered regions span residues 19-49 (QTHH…QPAP) and 272-291 (TGVS…EDDQ). Residues 272–284 (TGVSPGEGTSATM) show a composition bias toward polar residues. One can recognise an ELK domain in the interval 330–350 (ELKHELKQGYKEKIVDIREEI). The homeobox; TALE-type DNA-binding region spans 351 to 414 (LRKRRAGKLP…NQRKRNWHSN (64 aa)).

The protein belongs to the TALE/KNOX homeobox family. As to expression, maximally expressed in sepals, petals and fully expanded leaves. Also expressed in other flower organs and in developing leaves. Low level expression in stem internodes.

It localises to the nucleus. In Malus domestica (Apple), this protein is Homeobox protein knotted-1-like 3.